Here is a 551-residue protein sequence, read N- to C-terminus: Urocanate hydratase (551 aa).

NAD(+) contacts are provided by residues 48–49 (GG), Gln126, 172–174 (GMG), Glu192, Arg197, 238–239 (NA), 259–263 (QTSAH), 269–270 (YI), and Tyr318. The active site involves Cys406. An NAD(+)-binding site is contributed by Gly488.

Belongs to the urocanase family. It depends on NAD(+) as a cofactor.

The protein resides in the cytoplasm. It carries out the reaction 4-imidazolone-5-propanoate = trans-urocanate + H2O. Its pathway is amino-acid degradation; L-histidine degradation into L-glutamate; N-formimidoyl-L-glutamate from L-histidine: step 2/3. Functionally, catalyzes the conversion of urocanate to 4-imidazolone-5-propionate. This chain is Urocanate hydratase, found in Symbiobacterium thermophilum (strain DSM 24528 / JCM 14929 / IAM 14863 / T).